A 211-amino-acid polypeptide reads, in one-letter code: FMN-dependent NADH:quinone oxidoreductase 2 (211 aa).

Residues Ser10 and 17-19 (SRS) contribute to the FMN site.

It belongs to the azoreductase type 1 family. Homodimer. The cofactor is FMN.

The catalysed reaction is 2 a quinone + NADH + H(+) = 2 a 1,4-benzosemiquinone + NAD(+). It carries out the reaction N,N-dimethyl-1,4-phenylenediamine + anthranilate + 2 NAD(+) = 2-(4-dimethylaminophenyl)diazenylbenzoate + 2 NADH + 2 H(+). Quinone reductase that provides resistance to thiol-specific stress caused by electrophilic quinones. Functionally, also exhibits azoreductase activity. Catalyzes the reductive cleavage of the azo bond in aromatic azo compounds to the corresponding amines. The polypeptide is FMN-dependent NADH:quinone oxidoreductase 2 (Listeria monocytogenes serotype 4b (strain F2365)).